A 158-amino-acid polypeptide reads, in one-letter code: Transcription elongation factor GreA (158 aa).

Positions 1–26 (MNKVPLTEKGAQQLREELQELKTVVR) form a coiled coil.

Belongs to the GreA/GreB family.

Its function is as follows. Necessary for efficient RNA polymerase transcription elongation past template-encoded arresting sites. The arresting sites in DNA have the property of trapping a certain fraction of elongating RNA polymerases that pass through, resulting in locked ternary complexes. Cleavage of the nascent transcript by cleavage factors such as GreA or GreB allows the resumption of elongation from the new 3'terminus. GreA releases sequences of 2 to 3 nucleotides. This is Transcription elongation factor GreA from Nitrosococcus oceani (strain ATCC 19707 / BCRC 17464 / JCM 30415 / NCIMB 11848 / C-107).